The sequence spans 141 residues: Nucleoside diphosphate kinase (141 aa).

ATP is bound by residues Lys11, Phe59, Arg87, Thr93, Arg104, and Asn114. His117 (pros-phosphohistidine intermediate) is an active-site residue.

Belongs to the NDK family. Homotetramer. It depends on Mg(2+) as a cofactor.

The protein localises to the cytoplasm. It carries out the reaction a 2'-deoxyribonucleoside 5'-diphosphate + ATP = a 2'-deoxyribonucleoside 5'-triphosphate + ADP. It catalyses the reaction a ribonucleoside 5'-diphosphate + ATP = a ribonucleoside 5'-triphosphate + ADP. In terms of biological role, major role in the synthesis of nucleoside triphosphates other than ATP. The ATP gamma phosphate is transferred to the NDP beta phosphate via a ping-pong mechanism, using a phosphorylated active-site intermediate. This Verminephrobacter eiseniae (strain EF01-2) protein is Nucleoside diphosphate kinase.